The sequence spans 344 residues: 1-acyl-sn-glycerol-3-phosphate acyltransferase BAT2, chloroplastic (344 aa).

The transit peptide at 1–49 (MDVASAPGVSSHPPYYSKPICSSQSSLIRIPINKGCCFARSSNLITSLH) directs the protein to the chloroplast. The helical transmembrane segment at 113-133 (GICFCLVAGVSAIVLIVLMIT) threads the bilayer. Positions 188-193 (HQSFLD) match the HXXXXD motif motif. A helical transmembrane segment spans residues 210–230 (TGIFVIPVIGWAMSMMGVVPL).

It belongs to the 1-acyl-sn-glycerol-3-phosphate acyltransferase family. As to expression, widely expressed.

It is found in the plastid. Its subcellular location is the chloroplast membrane. It carries out the reaction a fatty acyl-[ACP] + a 1-acyl-sn-glycero-3-phosphate = a 1,2-diacyl-sn-glycero-3-phosphate + holo-[ACP]. It catalyses the reaction a 1-acyl-sn-glycero-3-phosphate + an acyl-CoA = a 1,2-diacyl-sn-glycero-3-phosphate + CoA. Its pathway is phospholipid metabolism; CDP-diacylglycerol biosynthesis; CDP-diacylglycerol from sn-glycerol 3-phosphate: step 2/3. Plastidial enzyme of the prokaryotic glycerol-3-phosphate pathway that converts lysophosphatidic acid (LPA) into phosphatidic acid by incorporating an acyl moiety at position sn-2. Utilizes palmitoyl-ACP (16:0-ACP) to produce phosphatidic acid containing a saturated group at position sn-2, which is characteristic of lipids synthesized by the prokaryotic pathway. In vitro, can use 16:0-CoA as acyl donor. The sequence is that of 1-acyl-sn-glycerol-3-phosphate acyltransferase BAT2, chloroplastic from Brassica napus (Rape).